The following is a 286-amino-acid chain: Probable protein VP2 (286 aa).

Disordered stretches follow at residues 67 to 108 (LPAA…GPED) and 184 to 286 (QAAR…GGGI). Residues 222–241 (GKTRSRRKAGRKAQRKRRRP) are compositionally biased toward basic residues. The span at 242 to 265 (SPSSSSSSCSNSESWESNSDSCST) shows a compositional bias: low complexity.

Phosphorylated at C-terminal serines.

The protein is Probable protein VP2 of Homo sapiens (Human).